Here is a 217-residue protein sequence, read N- to C-terminus: Ras-related protein Rab-19 (217 aa).

GTP contacts are provided by S26, V28, G29, K30, T31, C32, Y42, S43, E44, S45, and T49. Residue T31 coordinates Mg(2+). Positions 39–54 (SGVYSESQQNTIGVDF) match the Switch 1 motif. Mg(2+)-binding residues include T49 and D72. The Switch 2 signature appears at 74–89 (AGQERFRTITQSYYRS). The GTP site is built by G75, N130, K131, D133, S161, A162, and K163. 2 S-geranylgeranyl cysteine lipidation sites follow: C215 and C217. Residue C217 is modified to Cysteine methyl ester.

It belongs to the small GTPase superfamily. Rab family. It depends on Mg(2+) as a cofactor.

Its subcellular location is the cell membrane. The catalysed reaction is GTP + H2O = GDP + phosphate + H(+). With respect to regulation, regulated by guanine nucleotide exchange factors (GEFs) which promote the exchange of bound GDP for free GTP. Regulated by GTPase activating proteins (GAPs) which increase the GTP hydrolysis activity. Inhibited by GDP dissociation inhibitors (GDIs). Functionally, the small GTPases Rab are key regulators of intracellular membrane trafficking, from the formation of transport vesicles to their fusion with membranes. Rabs cycle between an inactive GDP-bound form and an active GTP-bound form that is able to recruit to membranes different set of downstream effectors directly responsible for vesicle formation, movement, tethering and fusion. This chain is Ras-related protein Rab-19, found in Rattus norvegicus (Rat).